We begin with the raw amino-acid sequence, 310 residues long: GMP synthase [glutamine-hydrolyzing] subunit B (310 aa).

Residues 1–187 enclose the GMPS ATP-PPase domain; sequence MSTSSYIDQI…LGLRTDLQPF (187 aa). 27 to 33 is an ATP binding site; sequence SGGQDSS.

Heterodimer composed of a glutamine amidotransferase subunit (A) and a GMP-binding subunit (B).

The enzyme catalyses XMP + L-glutamine + ATP + H2O = GMP + L-glutamate + AMP + diphosphate + 2 H(+). It participates in purine metabolism; GMP biosynthesis; GMP from XMP (L-Gln route): step 1/1. Catalyzes the synthesis of GMP from XMP. The chain is GMP synthase [glutamine-hydrolyzing] subunit B (guaAB) from Thermoplasma acidophilum (strain ATCC 25905 / DSM 1728 / JCM 9062 / NBRC 15155 / AMRC-C165).